Reading from the N-terminus, the 185-residue chain is Ribosome-recycling factor (185 aa).

The protein belongs to the RRF family.

The protein resides in the cytoplasm. Its function is as follows. Responsible for the release of ribosomes from messenger RNA at the termination of protein biosynthesis. May increase the efficiency of translation by recycling ribosomes from one round of translation to another. The polypeptide is Ribosome-recycling factor (Pseudothermotoga lettingae (strain ATCC BAA-301 / DSM 14385 / NBRC 107922 / TMO) (Thermotoga lettingae)).